Consider the following 574-residue polypeptide: Probable amino-acid permease meu22 (574 aa).

The next 9 membrane-spanning stretches (helical) occupy residues 69–89, 94–114, 173–193, 202–222, 291–311, 391–411, 412–432, 470–490, and 498–518; these read MIAIGGCVGTGLFVGSGNALA, ASILIAFAVIGTYVLFTTSAL, GPVSIWISVFYVIIIAINIWG, FFLSIMKVISVIGFVILSIII, IFWRIFLFYIVALFMLTLVVP, PIYAIAVTLLFGSIAYFTEAG, VGGALFGWLLSICGLSTTFIW, GVAMTILALIAQFYVAVFPIG, and FFQAYMAAPILIISFVAWKFF.

It belongs to the amino acid-polyamine-organocation (APC) superfamily.

Its subcellular location is the membrane. This chain is Probable amino-acid permease meu22 (meu22), found in Schizosaccharomyces pombe (strain 972 / ATCC 24843) (Fission yeast).